The following is a 397-amino-acid chain: MQLEHLPEEFEMARPVLQTIEQAGYEAYFVGGSVRDTILGKEIHDVDIATSAYPDEIKHLFKRTVDTGIEHGTVMILDHGTGYETTTFRSESTYTDFRRPDQVTFVRSLAEDLKRRDFTINALAMKEDGTVIDLFDGLADLKHRQIRAVGDPQERFHEDALRMMRAVRFASQLNFTIVPETLAAMTSHAELLRKIAVERTQVELLKLLTGQAPQQGLTDLLTTGLWQYCPDFADHKVDLERLTAQLHQGASTDLTAWTLLTTSFGLETNAITTFLKHWKTANQTISAVQMTTKMAQHLLQGSLSTWQVYQCGEDQLMIANEAAVVLGATDRSRELVAQWQNLPIQTKKALAVTGRDLMQAGVQPGPQLGAILGDLEYQVVTGKLPNEKPALVAAVTD.

ATP-binding residues include G32 and R35. G32 and R35 together coordinate CTP. 2 residues coordinate Mg(2+): D45 and D47. ATP is bound by residues R116, D159, R162, R165, and R168. Positions 116, 159, 162, 165, and 168 each coordinate CTP.

Belongs to the tRNA nucleotidyltransferase/poly(A) polymerase family. Bacterial CCA-adding enzyme type 3 subfamily. As to quaternary structure, homodimer. It depends on Mg(2+) as a cofactor.

It catalyses the reaction a tRNA precursor + 2 CTP + ATP = a tRNA with a 3' CCA end + 3 diphosphate. The catalysed reaction is a tRNA with a 3' CCA end + 2 CTP + ATP = a tRNA with a 3' CCACCA end + 3 diphosphate. Its function is as follows. Catalyzes the addition and repair of the essential 3'-terminal CCA sequence in tRNAs without using a nucleic acid template. Adds these three nucleotides in the order of C, C, and A to the tRNA nucleotide-73, using CTP and ATP as substrates and producing inorganic pyrophosphate. tRNA 3'-terminal CCA addition is required both for tRNA processing and repair. Also involved in tRNA surveillance by mediating tandem CCA addition to generate a CCACCA at the 3' terminus of unstable tRNAs. While stable tRNAs receive only 3'-terminal CCA, unstable tRNAs are marked with CCACCA and rapidly degraded. This chain is CCA-adding enzyme, found in Levilactobacillus brevis (strain ATCC 367 / BCRC 12310 / CIP 105137 / JCM 1170 / LMG 11437 / NCIMB 947 / NCTC 947) (Lactobacillus brevis).